The sequence spans 55 residues: Large ribosomal subunit protein bL32c (55 aa).

This sequence belongs to the bacterial ribosomal protein bL32 family.

Its subcellular location is the plastid. The protein localises to the chloroplast. The polypeptide is Large ribosomal subunit protein bL32c (Atropa belladonna (Belladonna)).